The primary structure comprises 152 residues: UPF0266 membrane protein YobD (152 aa).

Helical transmembrane passes span 6-26 (LVLI…QFIM), 45-65 (VDSV…VTSH), and 67-87 (AQMT…IFWI).

The protein belongs to the UPF0266 family.

It is found in the cell inner membrane. This is UPF0266 membrane protein YobD from Salmonella choleraesuis (strain SC-B67).